A 449-amino-acid chain; its full sequence is Phosphomannomutase (449 aa).

Ser97 (phosphoserine intermediate) is an active-site residue. Mg(2+)-binding residues include Ser97, Asp237, Asp239, and Asp241.

It belongs to the phosphohexose mutase family. Mg(2+) is required as a cofactor.

It catalyses the reaction alpha-D-mannose 1-phosphate = D-mannose 6-phosphate. Its pathway is amino-acid biosynthesis. Catalyzes the formation of mannose-1-P from mannose-6-P. Can also use glucose-6-P. The polypeptide is Phosphomannomutase (manB) (Methanocaldococcus jannaschii (strain ATCC 43067 / DSM 2661 / JAL-1 / JCM 10045 / NBRC 100440) (Methanococcus jannaschii)).